The sequence spans 157 residues: uncharacterized protein (157 aa).

The span at 1–11 (MGDLEGQDRPD) shows a compositional bias: basic and acidic residues. A disordered region spans residues 1 to 22 (MGDLEGQDRPDPISTMVGPSGT).

Its subcellular location is the mitochondrion. This is an uncharacterized protein from Arabidopsis thaliana (Mouse-ear cress).